The sequence spans 220 residues: Redox-sensing transcriptional repressor Rex (220 aa).

The H-T-H motif DNA-binding region spans 25 to 64; sequence WYLSNVKLLKQKGERYVSSTQISKEINIDASQIAKDLSYV. 99-104 is an NAD(+) binding site; the sequence is GVGSLG.

It belongs to the transcriptional regulatory Rex family. Homodimer.

It is found in the cytoplasm. In terms of biological role, modulates transcription in response to changes in cellular NADH/NAD(+) redox state. This chain is Redox-sensing transcriptional repressor Rex, found in Bacteroides fragilis (strain ATCC 25285 / DSM 2151 / CCUG 4856 / JCM 11019 / LMG 10263 / NCTC 9343 / Onslow / VPI 2553 / EN-2).